We begin with the raw amino-acid sequence, 193 residues long: Ion-translocating oxidoreductase complex subunit A (193 aa).

The next 6 membrane-spanning stretches (helical) occupy residues 5–25 (LLLF…FLGL), 47–67 (FVMT…LIPL), 72–92 (LRTL…EMVV), 102–122 (LLGI…VALL), 134–154 (ALYG…FAAI), and 171–191 (AIAL…SGLV).

This sequence belongs to the NqrDE/RnfAE family. In terms of assembly, the complex is composed of six subunits: RnfA, RnfB, RnfC, RnfD, RnfE and RnfG.

It is found in the cell inner membrane. In terms of biological role, part of a membrane-bound complex that couples electron transfer with translocation of ions across the membrane. The chain is Ion-translocating oxidoreductase complex subunit A from Citrobacter koseri (strain ATCC BAA-895 / CDC 4225-83 / SGSC4696).